We begin with the raw amino-acid sequence, 59 residues long: Gallinacin-14 (59 aa).

A signal peptide spans methionine 1–proline 18. Disulfide bonds link cysteine 25-cysteine 54, cysteine 32-cysteine 47, and cysteine 37-cysteine 55.

The protein belongs to the beta-defensin family.

The protein resides in the secreted. Its subcellular location is the cytoplasmic granule. Functionally, has bactericidal activity. This is Gallinacin-14 (GAL14) from Gallus gallus (Chicken).